The primary structure comprises 805 residues: MSFNHREIEKKWQDYWEQHKTFRTPDESDKPKFYVLDMFPYPSGAGLHVGHPEGYTATDILARMKRMQGYNVLHPMGWDAFGLPAEQYALDTGNDPAEFTQKNIDNFRRQIKSLGFSYDWDREINTTDPNYYKWTQWIFLKLYEKGLAYMDEVPVNWCPALGTVLANEEVINGRSERGGHPVIRKPMRQWMLKITAYADRLLEDLEELDWPESIKEMQRNWIGRSEGAEIEFAVDGHDESFTVFTTRPDTLFGATYAVLAPEHPLVEKITTPEQKPAVDAYLKEVQSKSDLERTDLAKEKTGVFTGAYAIHPVTGDKLPIWIADYVLMGYGTGAIMAVPAHDERDYEFAKTFNLPIKEVVAGGNVENEPYTGDGEHINSEFLNGLNKQEAIEKMIAWLEENGKGQKKVSYRLRDWLFSRQRYWGEPIPVIHWEDGTMTTVPEEELPLVLPKTDEIKPSGTGESPLANIEEWVNVVDPKTGKKGRRETNTMPQWAGSCWYYLRYIDPHNDKQLADPEKLKQWLPVDVYIGGAEHAVLHLLYARFWHKVLYDLGIVPTKEPFQKLFNQGMILGENNEKMSKSKGNVVNPDDIVESHGADTLRLYEMFMGPLEASIAWSTKGLDGARRFLERVWRLFVTEDGQLNPNIVDEPANDTLERVYHQTVKKVTEDYEALRFNTAISQLMVFINEAYKAEQMKKEYMEGFVKLLSPVCPHIGEELWQKLGHTDTIAYEPWPTYDEAKLVEDVVEIVIQINGKVRAKLNVPADLSKEALEERALADEKIKEQLAGKTVRKVITVPGKLVNIVAN.

Residues 40–51 carry the 'HIGH' region motif; sequence PYPSGAGLHVGH. Residues 576-580 carry the 'KMSKS' region motif; that stretch reads KMSKS. Lysine 579 is a binding site for ATP.

Belongs to the class-I aminoacyl-tRNA synthetase family.

It is found in the cytoplasm. The catalysed reaction is tRNA(Leu) + L-leucine + ATP = L-leucyl-tRNA(Leu) + AMP + diphosphate. The chain is Leucine--tRNA ligase from Geobacillus thermodenitrificans (strain NG80-2).